The sequence spans 607 residues: Proteasome-associated ATPase (607 aa).

Residues 1–17 (MTESDRHDTPKGDRRIS) are compositionally biased toward basic and acidic residues. Positions 1-65 (MTESDRHDTP…GRPAADNKEL (65 aa)) are disordered. The stretch at 59–102 (AADNKELQERVDNLTARNAKLLDTLKDARQQLVALREEVDRLGQ) forms a coiled coil. An ATP-binding site is contributed by 294 to 299 (GCGKTL). A docks into pockets in the proteasome alpha-ring region spans residues 606 to 607 (YL).

This sequence belongs to the AAA ATPase family. In terms of assembly, homohexamer. Assembles into a hexameric ring structure that caps the 20S proteasome core. Strongly interacts with the prokaryotic ubiquitin-like protein Pup through a hydrophobic interface; the interacting region of ARC lies in its N-terminal coiled-coil domain. There is one Pup binding site per ARC hexamer ring. Upon ATP-binding, the C-terminus of ARC interacts with the alpha-rings of the proteasome core, possibly by binding to the intersubunit pockets.

It participates in protein degradation; proteasomal Pup-dependent pathway. Its function is as follows. ATPase which is responsible for recognizing, binding, unfolding and translocation of pupylated proteins into the bacterial 20S proteasome core particle. May be essential for opening the gate of the 20S proteasome via an interaction with its C-terminus, thereby allowing substrate entry and access to the site of proteolysis. Thus, the C-termini of the proteasomal ATPase may function like a 'key in a lock' to induce gate opening and therefore regulate proteolysis. This chain is Proteasome-associated ATPase, found in Gordonia bronchialis (strain ATCC 25592 / DSM 43247 / BCRC 13721 / JCM 3198 / KCTC 3076 / NBRC 16047 / NCTC 10667) (Rhodococcus bronchialis).